A 450-amino-acid chain; its full sequence is MKKKNIYSIRKLGVGIASVTLGTLLISGGVTPAANAAQHDEAQQNAFYQVLNMPNLNADQRNGFIQSLKDDPSQSANVLGEAQKLNDSQAPKADAQQNNFNKDQQSAFYEILNMPNLNEAQRNGFIQSLKDDPSQSTNVLGEAKKLNESQAPKADNNFNKEQQNAFYEILNMPNLNEEQRNGFIQSLKDDPSQSANLLSEAKKLNESQAPKADNKFNKEQQNAFYEILHLPNLNEEQRNGFIQSLKDDPSVSKEILAEAKKLNDAQAPKEEDNKKPGKEDGNKPGKEDGNKPGKEDNKKPGKEDGNKPGKEDNNKPGKEDGNKPGKEDNNKPGKEDGNKPGKEDGNKPGKEDGNGVHVVKPGDTVNDIAKANGTTADKIAADNKLADKNMIKPGQELVVDKKQPANHADANKAQALPETGEENPFIGTTVFGGLSLALGAALLAGRRREL.

An N-terminal signal peptide occupies residues 1 to 36 (MKKKNIYSIRKLGVGIASVTLGTLLISGGVTPAANA). The YSIRK-G/S signaling motif motif lies at 7-18 (YSIRKLGVGIAS). Residues 37 to 92 (AQHDEAQQNAFYQVLNMPNLNADQRNGFIQSLKDDPSQSANVLGEAQKLNDSQAPK) form an Immunoglobulin-binding region E repeat. An Immunoglobulin-binding region D repeat occupies 93 to 153 (ADAQQNNFNK…KKLNESQAPK (61 aa)). The Immunoglobulin-binding region A repeat unit spans residues 154 to 211 (ADNNFNKEQQNAFYEILNMPNLNEEQRNGFIQSLKDDPSQSANLLSEAKKLNESQAPK). Residues 212 to 269 (ADNKFNKEQQNAFYEILHLPNLNEEQRNGFIQSLKDDPSVSKEILAEAKKLNDAQAPK) form an Immunoglobulin-binding region B/C repeat. Over residues 260 to 354 (KKLNDAQAPK…GNKPGKEDGN (95 aa)) the composition is skewed to basic and acidic residues. Disordered regions lie at residues 260 to 365 (KKLN…GDTV) and 401 to 421 (KKQP…ETGE). A run of 11 repeats spans residues 268-275 (PKEEDNKK), 276-283 (PGKEDGNK), 284-291 (PGKEDGNK), 292-299 (PGKEDNKK), 300-307 (PGKEDGNK), 308-315 (PGKEDNNK), 316-323 (PGKEDGNK), 324-331 (PGKEDNNK), 332-339 (PGKEDGNK), 340-347 (PGKEDGNK), and 348-355 (PGKEDGNG). Residues 268–355 (PKEEDNKKPG…NKPGKEDGNG (88 aa)) are 12 X 8 AA approximate tandem repeats. Residues 355–399 (GVHVVKPGDTVNDIAKANGTTADKIAADNKLADKNMIKPGQELVV) form the LysM domain. An LPXTG sorting signal motif is present at residues 416–420 (LPETG). Thr419 carries the post-translational modification Pentaglycyl murein peptidoglycan amidated threonine. The propeptide at 420–450 (GEENPFIGTTVFGGLSLALGAALLAGRRREL) is removed by sortase.

The protein belongs to the immunoglobulin-binding protein SpA family. In terms of assembly, interacts with host TNFRSF1A; this interaction leads to the stimulation of both surface expression and shedding of TNFRSF1A.

It localises to the secreted. Its subcellular location is the cell wall. Plays a role in the inhibition of the host innate and adaptive immune responses. Possesses five immunoglobulin-binding domains that capture both the fragment crystallizable region (Fc region) and the Fab region (part of Ig that identifies antigen) of immunoglobulins. In turn, Staphylococcus aureus is protected from phagocytic killing via inhibition of Ig Fc region. In addition, the host elicited B-cell response is prevented due to a decrease of antibody-secreting cell proliferation that enter the bone marrow, thereby decreasing long-term antibody production. Inhibits osteogenesis by preventing osteoblast proliferation and expression of alkaline phosphatase, type I collagen, osteopontin and osteocalcin. Acts directly as a pro-inflammatory factor in the lung through its ability to bind and activate tumor necrosis factor alpha receptor 1/TNFRSF1A. The sequence is that of Immunoglobulin G-binding protein A (spa) from Staphylococcus aureus (strain Mu50 / ATCC 700699).